The sequence spans 210 residues: 7-carboxy-7-deazaguanine synthase (210 aa).

Residues 12–14 and arginine 27 contribute to the substrate site; that span reads LQG. Positions 18–210 constitute a Radical SAM core domain; the sequence is QAGRAAVFCR…LQTHKYIGIP (193 aa). Residues cysteine 31, cysteine 46, and cysteine 49 each contribute to the [4Fe-4S] cluster site. Threonine 51 is a binding site for Mg(2+). Substrate is bound at residue threonine 90. S-adenosyl-L-methionine contacts are provided by residues glycine 92, 133-135, and 173-176; these read SPK and QPMD. Proline 210 lines the substrate pocket.

The protein belongs to the radical SAM superfamily. 7-carboxy-7-deazaguanine synthase family. As to quaternary structure, homodimer. [4Fe-4S] cluster is required as a cofactor. The cofactor is S-adenosyl-L-methionine. Mg(2+) serves as cofactor.

The catalysed reaction is 6-carboxy-5,6,7,8-tetrahydropterin + H(+) = 7-carboxy-7-deazaguanine + NH4(+). It functions in the pathway purine metabolism; 7-cyano-7-deazaguanine biosynthesis. In terms of biological role, catalyzes the complex heterocyclic radical-mediated conversion of 6-carboxy-5,6,7,8-tetrahydropterin (CPH4) to 7-carboxy-7-deazaguanine (CDG), a step common to the biosynthetic pathways of all 7-deazapurine-containing compounds. The sequence is that of 7-carboxy-7-deazaguanine synthase from Bordetella pertussis (strain Tohama I / ATCC BAA-589 / NCTC 13251).